Here is a 377-residue protein sequence, read N- to C-terminus: MKTFSDRWRQLDWDDIRLRINGKTAADVERALNASQLTRDDMMALLSPAASGYLEQLAQRAQRLTRQRFGNTVSFYVPLYLSNLCANDCTYCGFSMSNRIKRKTLDEADIARESAAIREMGFEHLLLVTGEHQAKVGMDYFRRHLPALREQFSSLQMEVQPLAETEYAELKQLGLDGVMVYQETYHEATYARHHLKGKKQDFFWRLETPDRLGRAGIDKIGLGALIGLSDNWRVDSYMVAEHLLWLQQHYWQSRYSVSFPRLRPCTGGIEPASIMDERQLVQTICAFRLLAPEIELSLSTRESPWFRDRVIPLAINNVSAFSKTQPGGYADNHPELEQFSPHDDRRPEAVAAALTAQGLQPVWKDWDSYLGRASQRL.

One can recognise a Radical SAM core domain in the interval 71–301; the sequence is NTVSFYVPLY…PEIELSLSTR (231 aa). [4Fe-4S] cluster contacts are provided by Cys-85, Cys-89, and Cys-92.

Belongs to the radical SAM superfamily. ThiH family. As to quaternary structure, forms a heterodimer with ThiG. [4Fe-4S] cluster is required as a cofactor.

It carries out the reaction L-tyrosine + S-adenosyl-L-methionine + NADPH = 2-iminoacetate + 4-methylphenol + 5'-deoxyadenosine + L-methionine + NADP(+). It functions in the pathway cofactor biosynthesis; thiamine diphosphate biosynthesis. Functionally, catalyzes the radical-mediated cleavage of tyrosine to 2-iminoacetate and 4-cresol. This chain is 2-iminoacetate synthase (thiH), found in Escherichia coli (strain K12).